We begin with the raw amino-acid sequence, 473 residues long: NAD-dependent protein deacetylase SRT1 (473 aa).

Residues 27–267 (SHLLQCKIEE…AGVMESLNMK (241 aa)) enclose the Deacetylase sirtuin-type domain. NAD(+)-binding positions include 52–71 (GAGISTSCGIPDFRGPKGIW) and 114–117 (QNVD). The active-site Proton acceptor is H134. Zn(2+)-binding residues include C142, C145, C167, and C172. Residues 209–211 (GTS), 235–237 (NLQ), and V253 contribute to the NAD(+) site. Residues 447–473 (LEGSGTSRKRSRTGKRKSKALAEETKA) are disordered. Positions 453–465 (SRKRSRTGKRKSK) are enriched in basic residues.

Belongs to the sirtuin family. Class IV subfamily. Binds to the promoter region of genes influenced by ethylene. Interacts with ENAP1; this interaction is enhanced in the presence of ethylene. Requires Zn(2+) as cofactor.

It localises to the nucleus. It catalyses the reaction N(6)-acetyl-L-lysyl-[protein] + NAD(+) + H2O = 2''-O-acetyl-ADP-D-ribose + nicotinamide + L-lysyl-[protein]. Functionally, NAD-dependent protein deacetylase. Has deacetylase activity towards H3K9Ac. May have a function in the safeguard against genome instability and DNA damage to ensure plant cell growth. Involved in responses to ethylene leading to the transcriptional repression of some ethylene-responsive genes via the regulation of histone acetylation H3K9Ac. The polypeptide is NAD-dependent protein deacetylase SRT1 (Arabidopsis thaliana (Mouse-ear cress)).